The following is a 228-amino-acid chain: Immunogenic protein MPB64 (228 aa).

The N-terminal stretch at 1–23 is a signal peptide; that stretch reads MRIKIFMLVTAVVLLCCSGVATA.

This sequence belongs to the RsiV family.

The protein resides in the secreted. The polypeptide is Immunogenic protein MPB64 (mpb64) (Mycobacterium bovis (strain ATCC BAA-935 / AF2122/97)).